A 256-amino-acid chain; its full sequence is Type III pantothenate kinase (256 aa).

Residue 6 to 13 (DIGNTNIV) participates in ATP binding. Position 107-110 (107-110 (GADI)) interacts with substrate. Asp109 serves as the catalytic Proton acceptor. Asp129 serves as a coordination point for K(+). Residue Thr132 participates in ATP binding. Residue Thr184 participates in substrate binding.

The protein belongs to the type III pantothenate kinase family. As to quaternary structure, homodimer. NH4(+) serves as cofactor. It depends on K(+) as a cofactor.

The protein localises to the cytoplasm. It catalyses the reaction (R)-pantothenate + ATP = (R)-4'-phosphopantothenate + ADP + H(+). Its pathway is cofactor biosynthesis; coenzyme A biosynthesis; CoA from (R)-pantothenate: step 1/5. In terms of biological role, catalyzes the phosphorylation of pantothenate (Pan), the first step in CoA biosynthesis. This Bifidobacterium longum (strain DJO10A) protein is Type III pantothenate kinase.